A 165-amino-acid chain; its full sequence is Probable chemoreceptor glutamine deamidase CheD (165 aa).

It belongs to the CheD family.

The enzyme catalyses L-glutaminyl-[protein] + H2O = L-glutamyl-[protein] + NH4(+). In terms of biological role, probably deamidates glutamine residues to glutamate on methyl-accepting chemotaxis receptors (MCPs), playing an important role in chemotaxis. This is Probable chemoreceptor glutamine deamidase CheD from Symbiobacterium thermophilum (strain DSM 24528 / JCM 14929 / IAM 14863 / T).